The chain runs to 324 residues: Aldo-keto reductase family 1 member C15 (324 aa).

Residues 24-26 and Asp51 each bind NADP(+); that span reads TFA. The Proton donor role is filled by Tyr56. His118 is a binding site for substrate. NADP(+) is bound by residues 167–168, Gln191, 217–225, and 269–281; these read SN, YSALGSHRD, and LAKSFNEKRIKEN.

This sequence belongs to the aldo/keto reductase family. In terms of assembly, monomer. Expressed in lung, specifically in bronchiolar club cells, type II alveolar cells and epithelial cells of the duct of the bronchial gland (at protein level). Expressed in gastric parietal cells and in epithelial cells of the large intestine and colon (at protein level). Expressed in brown adipocytes (at protein level). Expressed in vascular endothelial cells (at protein level).

It localises to the cytoplasm. It catalyses the reaction (2E,6E)-farnesol + NADP(+) = (2E,6E)-farnesal + NADPH + H(+). The dehydrogenase activity is inhibited by 3',3'',5',5''-tetraiodophenolphthalein, phenolphthalein, genistein, quercetin, zearalenone and diethylstilbestrol. Functionally, catalyzes the NADPH-dependent reduction of a variety of substrates including aromatic and aliphatic aldehydes, quinones, ketones, dicarbonyl compounds and 17-ketosteroids. Catalyzes the NADP(+)-dependent oxidation of aromatic, alicyclic and aliphatic alcohols, and 17beta-hydroxysteroids. To a lesser extent, can also catalyze the reduction of some aldoses and ketoses and the oxidation of some sugar alcohols. In the stomach, lung and colon tissues, mediates the reduction of farnesal and geranylgeranial into farnesol and geranylgeraniol respectively. By reducing 4-hydroxy-2-nonenal (HNE), produced during lipid peroxidation, into 1,4-dihydro-2-nonene (DHN), protects vascular endothelial cells from damage elicited by oxidized lipoproteins. This is Aldo-keto reductase family 1 member C15 from Rattus norvegicus (Rat).